The primary structure comprises 302 residues: Pantothenate synthetase (302 aa).

ATP is bound at residue 30 to 37; that stretch reads MGALHGGH. His37 serves as the catalytic Proton donor. Gln61 contributes to the (R)-pantoate binding site. Gln61 contacts beta-alanine. 147–150 lines the ATP pocket; sequence GEKD. A (R)-pantoate-binding site is contributed by Gln153. ATP-binding positions include Val176 and 184 to 187; that span reads KSSR.

This sequence belongs to the pantothenate synthetase family. Homodimer.

The protein localises to the cytoplasm. It catalyses the reaction (R)-pantoate + beta-alanine + ATP = (R)-pantothenate + AMP + diphosphate + H(+). It participates in cofactor biosynthesis; (R)-pantothenate biosynthesis; (R)-pantothenate from (R)-pantoate and beta-alanine: step 1/1. In terms of biological role, catalyzes the condensation of pantoate with beta-alanine in an ATP-dependent reaction via a pantoyl-adenylate intermediate. In Shouchella clausii (strain KSM-K16) (Alkalihalobacillus clausii), this protein is Pantothenate synthetase.